We begin with the raw amino-acid sequence, 137 residues long: Basic phospholipase A2 homolog APL-K49 (137 aa).

Residues 1-16 (MRTLWIVALLLVGVEG) form the signal peptide. 7 cysteine pairs are disulfide-bonded: cysteine 42–cysteine 131, cysteine 44–cysteine 60, cysteine 59–cysteine 111, cysteine 65–cysteine 137, cysteine 66–cysteine 104, cysteine 73–cysteine 97, and cysteine 91–cysteine 102. The segment at 121-133 (KKYKAYFKLKCKK) is important for membrane-damaging activities in eukaryotes and bacteria; heparin-binding.

This sequence belongs to the phospholipase A2 family. Group II subfamily. K49 sub-subfamily. Monomer. In terms of tissue distribution, expressed by the venom gland.

It localises to the secreted. Functionally, snake venom phospholipase A2 (PLA2) that lacks enzymatic activity. Does not show antibacterial activity. Is myotoxic and displays edema-inducing activities. A model of myotoxic mechanism has been proposed: an apo Lys49-PLA2 is activated by the entrance of a hydrophobic molecule (e.g. fatty acid) at the hydrophobic channel of the protein leading to a reorientation of a monomer. This reorientation causes a transition between 'inactive' to 'active' states, causing alignment of C-terminal and membrane-docking sites (MDoS) side-by-side and putting the membrane-disruption sites (MDiS) in the same plane, exposed to solvent and in a symmetric position for both monomers. The MDoS region stabilizes the toxin on membrane by the interaction of charged residues with phospholipid head groups. Subsequently, the MDiS region destabilizes the membrane with penetration of hydrophobic residues. This insertion causes a disorganization of the membrane, allowing an uncontrolled influx of ions (i.e. calcium and sodium), and eventually triggering irreversible intracellular alterations and cell death. This Agkistrodon piscivorus leucostoma (Western cottonmouth) protein is Basic phospholipase A2 homolog APL-K49.